Here is an 84-residue protein sequence, read N- to C-terminus: Small ribosomal subunit protein bS16 (84 aa).

It belongs to the bacterial ribosomal protein bS16 family.

This Desulforapulum autotrophicum (strain ATCC 43914 / DSM 3382 / VKM B-1955 / HRM2) (Desulfobacterium autotrophicum) protein is Small ribosomal subunit protein bS16.